Here is a 220-residue protein sequence, read N- to C-terminus: dITP/XTP pyrophosphatase (220 aa).

Substrate is bound at residue 13-18 (SHNAGK). Mg(2+) is bound by residues aspartate 45 and aspartate 74. Aspartate 74 serves as the catalytic Proton acceptor. Residues serine 75, 163 to 166 (FGYD), lysine 186, and 199 to 200 (HR) each bind substrate.

It belongs to the HAM1 NTPase family. In terms of assembly, homodimer. It depends on Mg(2+) as a cofactor.

The enzyme catalyses XTP + H2O = XMP + diphosphate + H(+). It carries out the reaction dITP + H2O = dIMP + diphosphate + H(+). It catalyses the reaction ITP + H2O = IMP + diphosphate + H(+). In terms of biological role, pyrophosphatase that catalyzes the hydrolysis of nucleoside triphosphates to their monophosphate derivatives, with a high preference for the non-canonical purine nucleotides XTP (xanthosine triphosphate), dITP (deoxyinosine triphosphate) and ITP. Seems to function as a house-cleaning enzyme that removes non-canonical purine nucleotides from the nucleotide pool, thus preventing their incorporation into DNA/RNA and avoiding chromosomal lesions. This chain is dITP/XTP pyrophosphatase, found in Brucella melitensis biotype 1 (strain ATCC 23456 / CCUG 17765 / NCTC 10094 / 16M).